A 762-amino-acid polypeptide reads, in one-letter code: Acyl-homoserine lactone acylase PvdQ (762 aa).

Residues Met-1–Ala-23 form the signal peptide. Residues Ala-194 to Gly-216 constitute a propeptide, spacer peptide. Ser-217 serves as the catalytic Nucleophile.

Belongs to the peptidase S45 family. As to quaternary structure, heterodimer of an alpha subunit and a beta subunit processed from the same precursor.

It is found in the periplasm. It carries out the reaction an N-acyl-L-homoserine lactone + H2O = L-homoserine lactone + a carboxylate. Its function is as follows. Catalyzes the deacylation of acyl-homoserine lactone (AHL or acyl-HSL), releasing homoserine lactone (HSL) and the corresponding fatty acid. Possesses a specificity for the degradation of long-chain acyl-HSLs (side chains of 11 to 14 carbons in length). Degrades 3-oxo-C12-HSL, one of the two main AHL signal molecules of P.aeruginosa, and thereby functions as a quorum quencher, inhibiting the las quorum-sensing system. Therefore, may enable P.aeruginosa to modulate its own quorum-sensing-dependent pathogenic potential. Also appears to be required for pyoverdin biosynthesis. The polypeptide is Acyl-homoserine lactone acylase PvdQ (pvdQ) (Pseudomonas aeruginosa (strain ATCC 15692 / DSM 22644 / CIP 104116 / JCM 14847 / LMG 12228 / 1C / PRS 101 / PAO1)).